We begin with the raw amino-acid sequence, 355 residues long: tRNA uridine(34) hydroxylase (355 aa).

In terms of domain architecture, Rhodanese spans 146 to 240; it reads KDPDALFVDM…YVRTAKKKDL (95 aa). Cys-200 acts as the Cysteine persulfide intermediate in catalysis.

The protein belongs to the TrhO family.

It carries out the reaction uridine(34) in tRNA + AH2 + O2 = 5-hydroxyuridine(34) in tRNA + A + H2O. In terms of biological role, catalyzes oxygen-dependent 5-hydroxyuridine (ho5U) modification at position 34 in tRNAs. This Hamiltonella defensa subsp. Acyrthosiphon pisum (strain 5AT) protein is tRNA uridine(34) hydroxylase.